The primary structure comprises 76 residues: U10-ctenitoxin-Pn1a (76 aa).

Positions 1-15 (SFVFYLFTLITVVRA) are cleaved as a signal peptide. The propeptide occupies 16 to 36 (EEFILENEAEDIAPAVHGESG). 4 cysteine pairs are disulfide-bonded: Cys39–Cys54, Cys46–Cys59, Cys53–Cys73, and Cys61–Cys71.

It belongs to the neurotoxin 02 (plectoxin) family. 09 subfamily. As to expression, expressed by the venom gland.

The protein localises to the secreted. The protein is U10-ctenitoxin-Pn1a of Phoneutria nigriventer (Brazilian armed spider).